The sequence spans 297 residues: 4-hydroxy-tetrahydrodipicolinate synthase (297 aa).

Residue T46 coordinates pyruvate. Residue Y134 is the Proton donor/acceptor of the active site. K162 serves as the catalytic Schiff-base intermediate with substrate. Pyruvate is bound at residue I204.

Belongs to the DapA family. Homotetramer; dimer of dimers.

It localises to the cytoplasm. The catalysed reaction is L-aspartate 4-semialdehyde + pyruvate = (2S,4S)-4-hydroxy-2,3,4,5-tetrahydrodipicolinate + H2O + H(+). It participates in amino-acid biosynthesis; L-lysine biosynthesis via DAP pathway; (S)-tetrahydrodipicolinate from L-aspartate: step 3/4. In terms of biological role, catalyzes the condensation of (S)-aspartate-beta-semialdehyde [(S)-ASA] and pyruvate to 4-hydroxy-tetrahydrodipicolinate (HTPA). The polypeptide is 4-hydroxy-tetrahydrodipicolinate synthase (Stenotrophomonas maltophilia (strain K279a)).